Consider the following 2183-residue polypeptide: Genome polyprotein (2183 aa).

Gly-2 is lipidated: N-myristoyl glycine; by host. Residues 2 to 1493 (GAQVSTQKTG…HVSRAFICLQ (1492 aa)) lie on the Cytoplasmic side of the membrane. An amphipathic alpha-helix region spans residues 566 to 582 (FYQGPTEESVERAMGRV). Catalysis depends on for protease 2A activity residues His-870 and Asp-888. Positions 905 and 907 each coordinate Zn(2+). Cys-959 functions as the For protease 2A activity in the catalytic mechanism. 2 residues coordinate Zn(2+): Cys-965 and His-967. Residues 1099 to 1171 (NNNWLKKFTE…EQSAPSQSDQ (73 aa)) are membrane-binding. Residues 1099-1237 (NNNWLKKFTE…SPGAGKSVAT (139 aa)) are oligomerization. An RNA-binding region spans residues 1120–1124 (AVKIQ). The SF3 helicase domain occupies 1203 to 1359 (EKKMSNYIQF…SMYSQNGKIN (157 aa)). Zn(2+)-binding residues include Cys-1367, Cys-1379, and Cys-1384. Residues 1367 to 1384 (CDEECCPVNFKKCCPLVC) form a C4-type; degenerate zinc finger. The tract at residues 1411 to 1418 (EYNHRHSV) is RNA-binding. The interval 1422-1427 (LEALFQ) is oligomerization. The stretch at 1494–1509 (ALTTFVSVAGIIYIIY) is an intramembrane region. At 1510-2183 (KLFAGFQGAY…TLRRKWLDAF (674 aa)) the chain is on the cytoplasmic side. The residue at position 1519 (Tyr-1519) is an O-(5'-phospho-RNA)-tyrosine. Positions 1539 to 1717 (GPAFEFAVAM…FSASLLRHYF (179 aa)) constitute a Peptidase C3 domain. Residues His-1578, Glu-1609, and Cys-1685 each act as for protease 3C activity in the active site. The RdRp catalytic domain occupies 1948-2064 (GHLRAFDYSG…SYPLPIDASL (117 aa)). Residues Asp-1954 and Asp-2050 each contribute to the Mg(2+) site.

Belongs to the picornaviruses polyprotein family. In terms of assembly, interacts with capsid protein VP1 and capsid protein VP3 to form heterotrimeric protomers. As to quaternary structure, interacts with capsid protein VP0, and capsid protein VP3 to form heterotrimeric protomers. Five protomers subsequently associate to form pentamers which serve as building blocks for the capsid. Interacts with capsid protein VP2, capsid protein VP3 and capsid protein VP4 following cleavage of capsid protein VP0. Interacts with host CXADR. Interacts with capsid protein VP1 and capsid protein VP3 in the mature capsid. In terms of assembly, interacts with capsid protein VP0 and capsid protein VP1 to form heterotrimeric protomers. Five protomers subsequently associate to form pentamers which serve as building blocks for the capsid. Interacts with capsid protein VP4 in the mature capsid. Interacts with protein 2C; this interaction may be important for virion morphogenesis. As to quaternary structure, interacts with capsid protein VP1 and capsid protein VP3. Homodimer. In terms of assembly, homohexamer; forms a hexameric ring structure with 6-fold symmetry characteristic of AAA+ ATPases. Interacts (via N-terminus) with host RTN3 (via reticulon domain); this interaction is important for viral replication. Interacts with capsid protein VP3; this interaction may be important for virion morphogenesis. As to quaternary structure, interacts with protein 3CD. Homodimer. Interacts with host GBF1. Interacts (via GOLD domain) with host ACBD3 (via GOLD domain); this interaction allows the formation of a viral protein 3A/ACBD3 heterotetramer with a 2:2 stoichiometry, which will stimulate the recruitment of host PI4KB in order to synthesize PI4P at the viral RNA replication sites. In terms of assembly, interacts with RNA-directed RNA polymerase. As to quaternary structure, interacts with protein 3AB and with RNA-directed RNA polymerase. Interacts with Viral protein genome-linked and with protein 3CD. Mg(2+) is required as a cofactor. Specific enzymatic cleavages in vivo by the viral proteases yield processing intermediates and the mature proteins. In terms of processing, myristoylation is required for the formation of pentamers during virus assembly. Further assembly of 12 pentamers and a molecule of genomic RNA generates the provirion. Post-translationally, during virion maturation, immature virions are rendered infectious following cleavage of VP0 into VP4 and VP2. This maturation seems to be an autocatalytic event triggered by the presence of RNA in the capsid and it is followed by a conformational change infectious virion. Myristoylation is required during RNA encapsidation and formation of the mature virus particle. In terms of processing, VPg is uridylylated by the polymerase into VPg-pUpU. This acts as a nucleotide-peptide primer for the genomic RNA replication.

It localises to the virion. The protein resides in the host cytoplasm. It is found in the host cytoplasmic vesicle membrane. Its subcellular location is the host nucleus. The enzyme catalyses a ribonucleoside 5'-triphosphate + H2O = a ribonucleoside 5'-diphosphate + phosphate + H(+). It catalyses the reaction Selective cleavage of Tyr-|-Gly bond in the picornavirus polyprotein.. It carries out the reaction RNA(n) + a ribonucleoside 5'-triphosphate = RNA(n+1) + diphosphate. The catalysed reaction is Selective cleavage of Gln-|-Gly bond in the poliovirus polyprotein. In other picornavirus reactions Glu may be substituted for Gln, and Ser or Thr for Gly.. With respect to regulation, replication or transcription is subject to high level of random mutations by the nucleotide analog ribavirin. Functionally, forms an icosahedral capsid of pseudo T=3 symmetry with capsid proteins VP2 and VP3. The capsid is 300 Angstroms in diameter, composed of 60 copies of each capsid protein and enclosing the viral positive strand RNA genome. Capsid protein VP1 mainly forms the vertices of the capsid. Capsid protein VP1 interacts with host CXADR to provide virion attachment to target host cells. This attachment induces virion internalization. Tyrosine kinases are probably involved in the entry process. After binding to its receptor, the capsid undergoes conformational changes. Capsid protein VP1 N-terminus (that contains an amphipathic alpha-helix) and capsid protein VP4 are externalized. Together, they shape a pore in the host membrane through which viral genome is translocated to host cell cytoplasm. In terms of biological role, forms an icosahedral capsid of pseudo T=3 symmetry with capsid proteins VP2 and VP3. The capsid is 300 Angstroms in diameter, composed of 60 copies of each capsid protein and enclosing the viral positive strand RNA genome. Lies on the inner surface of the capsid shell. After binding to the host receptor, the capsid undergoes conformational changes. Capsid protein VP4 is released, Capsid protein VP1 N-terminus is externalized, and together, they shape a pore in the host membrane through which the viral genome is translocated into the host cell cytoplasm. Its function is as follows. Component of immature procapsids, which is cleaved into capsid proteins VP4 and VP2 after maturation. Allows the capsid to remain inactive before the maturation step. Functionally, cysteine protease that cleaves viral polyprotein and specific host proteins. It is responsible for the autocatalytic cleavage between the P1 and P2 regions, which is the first cleavage occurring in the polyprotein. Also cleaves the host translation initiation factor EIF4G1, in order to shut down the capped cellular mRNA translation. Inhibits the host nucleus-cytoplasm protein and RNA trafficking by cleaving host members of the nuclear pores. Counteracts stress granule formation probably by antagonizing its assembly or promoting its dissassembly. Cleaves and inhibits host IFIH1/MDA5, thereby inhibiting the type-I IFN production and the establishment of the antiviral state. Cleaves and inhibits host MAVS, thereby inhibiting the type-I IFN production and the establishment of the antiviral state. In terms of biological role, plays an essential role in the virus replication cycle by acting as a viroporin. Creates a pore in the host endoplasmic reticulum and as a consequence releases Ca2+ in the cytoplasm of infected cell. In turn, high levels of cytoplasmic calcium may trigger membrane trafficking and transport of viral ER-associated proteins to viroplasms, sites of viral genome replication. Induces and associates with structural rearrangements of intracellular membranes. Displays RNA-binding, nucleotide binding and NTPase activities. May play a role in virion morphogenesis and viral RNA encapsidation by interacting with the capsid protein VP3. Its function is as follows. Localizes the viral replication complex to the surface of membranous vesicles. Together with protein 3CD binds the Cis-Active RNA Element (CRE) which is involved in RNA synthesis initiation. Acts as a cofactor to stimulate the activity of 3D polymerase, maybe through a nucleid acid chaperone activity. Functionally, localizes the viral replication complex to the surface of membranous vesicles. It inhibits host cell endoplasmic reticulum-to-Golgi apparatus transport and causes the disassembly of the Golgi complex, possibly through GBF1 interaction. This would result in depletion of MHC, trail receptors and IFN receptors at the host cell surface. Plays an essential role in viral RNA replication by recruiting ACBD3 and PI4KB at the viral replication sites, thereby allowing the formation of the rearranged membranous structures where viral replication takes place. In terms of biological role, acts as a primer for viral RNA replication and remains covalently bound to viral genomic RNA. VPg is uridylylated prior to priming replication into VPg-pUpU. The oriI viral genomic sequence may act as a template for this. The VPg-pUpU is then used as primer on the genomic RNA poly(A) by the RNA-dependent RNA polymerase to replicate the viral genome. During genome replication, the VPg-RNA linkage is removed by the host TDP2, thereby accelerating replication. During the late stage of the replication cycle, host TDP2 is excluded from sites of viral RNA synthesis and encapsidation, allowing for the generation of progeny virions. Involved in the viral replication complex and viral polypeptide maturation. It exhibits protease activity with a specificity and catalytic efficiency that is different from protease 3C. Protein 3CD lacks polymerase activity. Protein 3CD binds to the 5'UTR of the viral genome. Its function is as follows. Replicates the viral genomic RNA on the surface of intracellular membranes. May form linear arrays of subunits that propagate along a strong head-to-tail interaction called interface-I. Covalently attaches UMP to a tyrosine of VPg, which is used to prime RNA synthesis. The positive stranded RNA genome is first replicated at virus induced membranous vesicles, creating a dsRNA genomic replication form. This dsRNA is then used as template to synthesize positive stranded RNA genomes. ss(+)RNA genomes are either translated, replicated or encapsidated. Functionally, major viral protease that mediates proteolytic processing of the polyprotein. Cleaves host EIF5B, contributing to host translation shutoff. Also cleaves host PABPC1, contributing to host translation shutoff. Cleaves host NLRP1, triggers host N-glycine-mediated degradation of the autoinhibitory NLRP1 N-terminal fragment. The sequence is that of Genome polyprotein from Coxsackievirus B4 (strain E2).